A 622-amino-acid chain; its full sequence is Low affinity potassium transport system protein Kup (622 aa).

12 helical membrane passes run Leu-9–Leu-29, Val-49–Leu-69, Val-103–Ile-123, Pro-137–Ile-157, Val-165–Leu-185, Val-213–Ala-233, Trp-247–Leu-267, Pro-276–Ala-296, Ile-337–Phe-357, Leu-363–Thr-383, Phe-396–Leu-416, and Leu-419–Thr-439.

Belongs to the HAK/KUP transporter (TC 2.A.72) family.

It is found in the cell inner membrane. It carries out the reaction K(+)(in) + H(+)(in) = K(+)(out) + H(+)(out). Functionally, responsible for the low-affinity transport of potassium into the cell. Likely operates as a K(+):H(+) symporter. The chain is Low affinity potassium transport system protein Kup from Shigella boydii serotype 18 (strain CDC 3083-94 / BS512).